A 103-amino-acid chain; its full sequence is Large ribosomal subunit protein bL21 (103 aa).

The protein belongs to the bacterial ribosomal protein bL21 family. In terms of assembly, part of the 50S ribosomal subunit. Contacts protein L20.

Its function is as follows. This protein binds to 23S rRNA in the presence of protein L20. The protein is Large ribosomal subunit protein bL21 of Paracidovorax citrulli (strain AAC00-1) (Acidovorax citrulli).